Here is a 544-residue protein sequence, read N- to C-terminus: MSNSSRNATEQNNKCSAAGVNSVAAALCPLSNCQFSGVVISAIADEQKLEFNNIYKSSCTLSCSYDSQGVLVRIMLDNDQGHVLKEYMLSADTDAAQLGKRSYAVSLESDNLVLRFASDKDQQLFRKVVENVKHLRPKSVFSQRTEESSASQYFQFYGYLSQQQNMMQDYVRTSTYQRAILGNSIDFQDKIVLDVGAGSGILSFFAVQAGAAKVYAIEASNMAQYAQQLVESNNVQHKISVIPGKIEEIELPEKVDVIISEPMGYMLYNERMLETYLHARKWLKPQGKMYPTHGDLHIAPFSDDSLYSEQYNKANFWYQSAFHGVDLTTLHKEGMKEYFRQPIVDTFDIRICMAKSVRHVCDFLNDKENDLHLIDIPLEFHILQTGICHGLAFWFDVEFSGSTQNVWLSTSPTAPLTHWYQVRCLLPMPIFIKQGQTLTGRVLLEANRRQSYDVTIDLHIEGTLISSSNTLDLKNPYFRYTGAPVQAPPGTNTQSPSEQYWTQMDTQQQQQGSRNSNSMLNGGLSVNGMADPGMDINLGLMHPH.

Positions 150–459 constitute an SAM-dependent MTase PRMT-type domain; the sequence is ASQYFQFYGY…QSYDVTIDLH (310 aa). 6 residues coordinate S-adenosyl-L-methionine: Gln-163, Arg-172, Gly-196, Glu-218, Glu-247, and Thr-275. Residues 505-520 show a composition bias toward polar residues; the sequence is DTQQQQQGSRNSNSML. The disordered stretch occupies residues 505 to 527; the sequence is DTQQQQQGSRNSNSMLNGGLSVN. Position 514 is an asymmetric dimethylarginine; by autocatalysis (Arg-514).

It belongs to the class I-like SAM-binding methyltransferase superfamily. Protein arginine N-methyltransferase family. Homodimer. The dimethylated protein is the major form.

The protein localises to the cytoplasm. It is found in the nucleus. The enzyme catalyses L-arginyl-[protein] + 2 S-adenosyl-L-methionine = N(omega),N(omega)-dimethyl-L-arginyl-[protein] + 2 S-adenosyl-L-homocysteine + 2 H(+). Functionally, methylates (mono- and asymmetric dimethylation) the guanidino nitrogens of arginyl residues in proteins. May methylate histone H3 at 'Arg-17' and activate transcription via chromatin remodeling. The polypeptide is Histone-arginine methyltransferase CARMER (Art4) (Drosophila grimshawi (Hawaiian fruit fly)).